We begin with the raw amino-acid sequence, 333 residues long: Probable tRNA pseudouridine synthase B (333 aa).

The active-site Nucleophile is D66. Residues 233–308 (LKKIIIKDSA…EVVEITRVIM (76 aa)) enclose the PUA domain.

It belongs to the pseudouridine synthase TruB family. Type 2 subfamily.

The enzyme catalyses uridine(55) in tRNA = pseudouridine(55) in tRNA. Could be responsible for synthesis of pseudouridine from uracil-55 in the psi GC loop of transfer RNAs. This is Probable tRNA pseudouridine synthase B from Methanococcus maripaludis (strain DSM 14266 / JCM 13030 / NBRC 101832 / S2 / LL).